The chain runs to 290 residues: 4-hydroxybenzoate octaprenyltransferase (290 aa).

The next 6 helical transmembrane spans lie at 41–61 (WPLV…GCAM), 89–109 (WEAV…ILPL), 133–153 (FFAI…PMAF), 158–178 (GTVP…SVAY), 202–224 (FGRF…YAWI), and 269–289 (WLGG…GAAG).

This sequence belongs to the UbiA prenyltransferase family. Requires Mg(2+) as cofactor.

It localises to the cell inner membrane. It catalyses the reaction all-trans-octaprenyl diphosphate + 4-hydroxybenzoate = 4-hydroxy-3-(all-trans-octaprenyl)benzoate + diphosphate. It functions in the pathway cofactor biosynthesis; ubiquinone biosynthesis. In terms of biological role, catalyzes the prenylation of para-hydroxybenzoate (PHB) with an all-trans polyprenyl group. Mediates the second step in the final reaction sequence of ubiquinone-8 (UQ-8) biosynthesis, which is the condensation of the polyisoprenoid side chain with PHB, generating the first membrane-bound Q intermediate 3-octaprenyl-4-hydroxybenzoate. The protein is 4-hydroxybenzoate octaprenyltransferase of Burkholderia vietnamiensis (strain G4 / LMG 22486) (Burkholderia cepacia (strain R1808)).